A 568-amino-acid chain; its full sequence is Type 2 DNA topoisomerase 6 subunit B (568 aa).

ATP is bound by residues asparagine 46, aspartate 78, 99 to 100 (TK), 109 to 116 (GQQGIGIS), and lysine 473.

This sequence belongs to the TOP6B family. Homodimer. Heterotetramer of two Top6A and two Top6B chains.

It carries out the reaction ATP-dependent breakage, passage and rejoining of double-stranded DNA.. Relaxes both positive and negative superturns and exhibits a strong decatenase activity. This is Type 2 DNA topoisomerase 6 subunit B from Pyrococcus furiosus (strain ATCC 43587 / DSM 3638 / JCM 8422 / Vc1).